We begin with the raw amino-acid sequence, 294 residues long: MSNSNRVLKLGLPKGSLQDSTIELFGNAGFHFSVQSRSYFPSIDDDELEAILIRAQEMAHYVELGAFDVGLTGKDWIIETGADVVEVADLVYSKASMRPVRWVLAVPENSPIKTVKDLEGKHIATEVVNITRKYLESNGVTAAVEFSWGATEVKPPDLADAIVEVTETGSSLRANKLRIVETILESNTKLIANKSSWDDPWKREKIESMALMLQGAINAQGKVGLKMNAPESALEAITAMIPALRQPTVSHLAHNQWVALEVIVLEREVRKLIPELKKAGAEGIFEYDINKLID.

It belongs to the ATP phosphoribosyltransferase family. Long subfamily. The cofactor is Mg(2+).

It localises to the cytoplasm. The enzyme catalyses 1-(5-phospho-beta-D-ribosyl)-ATP + diphosphate = 5-phospho-alpha-D-ribose 1-diphosphate + ATP. The protein operates within amino-acid biosynthesis; L-histidine biosynthesis; L-histidine from 5-phospho-alpha-D-ribose 1-diphosphate: step 1/9. With respect to regulation, feedback inhibited by histidine. Its function is as follows. Catalyzes the condensation of ATP and 5-phosphoribose 1-diphosphate to form N'-(5'-phosphoribosyl)-ATP (PR-ATP). Has a crucial role in the pathway because the rate of histidine biosynthesis seems to be controlled primarily by regulation of HisG enzymatic activity. This is ATP phosphoribosyltransferase from Chlorobium phaeovibrioides (strain DSM 265 / 1930) (Prosthecochloris vibrioformis (strain DSM 265)).